A 472-amino-acid chain; its full sequence is Radical SAM cyclopropyl synthase TigE (472 aa).

The region spanning 106-331 (GEQIKAIQLV…VIDLYEYGLD (226 aa)) is the Radical SAM core domain. Residues Cys-120, Cys-124, Cys-127, Tyr-339, Cys-360, Cys-378, Cys-414, Cys-417, Cys-423, Cys-427, and Cys-446 each coordinate [4Fe-4S] cluster.

Belongs to the radical SAM superfamily. It depends on [4Fe-4S] cluster as a cofactor.

The enzyme catalyses L-isoleucyl-[protein] + AH2 + 2 S-adenosyl-L-methionine = methylcyclopropylglycine-[protein] + 2 5'-deoxyadenosine + 2 L-methionine + A + 2 H(+). Functionally, radical S-adenosylmethionine (SAM) enzyme that catalyzes the formation of methylcyclopropylglycine (mCPG) residues from isoleucine residues residing in the repeating TIGSVS motif of the precursor peptide TigB. Is thus involved in the maturation of a ribosomally synthesized and post-translationally modified peptide (RiPP). In Paramaledivibacter caminithermalis (strain DSM 15212 / CIP 107654 / DViRD3) (Clostridium caminithermale), this protein is Radical SAM cyclopropyl synthase TigE.